A 385-amino-acid polypeptide reads, in one-letter code: Probable alpha-galactosidase (385 aa).

Positions 1-19 are cleaved as a signal peptide; that stretch reads MMKIAATLLATIALATVNA. Intrachain disulfides connect cysteine 40/cysteine 72 and cysteine 119/cysteine 149. Aspartate 147 functions as the Nucleophile in the catalytic mechanism. 180–184 contributes to the substrate binding site; the sequence is DWGYE. Aspartate 202 functions as the Proton donor in the catalytic mechanism.

The protein belongs to the glycosyl hydrolase 27 family.

The enzyme catalyses Hydrolysis of terminal, non-reducing alpha-D-galactose residues in alpha-D-galactosides, including galactose oligosaccharides, galactomannans and galactolipids.. This chain is Probable alpha-galactosidase (melA), found in Dictyostelium discoideum (Social amoeba).